Consider the following 212-residue polypeptide: Thymidylate kinase (212 aa).

Position 11–18 (11–18) interacts with ATP; that stretch reads GPEGAGKT.

This sequence belongs to the thymidylate kinase family.

The enzyme catalyses dTMP + ATP = dTDP + ADP. In terms of biological role, phosphorylation of dTMP to form dTDP in both de novo and salvage pathways of dTTP synthesis. This Streptococcus pneumoniae (strain Hungary19A-6) protein is Thymidylate kinase.